Reading from the N-terminus, the 533-residue chain is tRNA(Ile)-lysidine synthase (533 aa).

Residue 21 to 26 (SGGADS) coordinates ATP. One can recognise a CMP/dCMP-type deaminase domain in the interval 377 to 500 (DLLDTAMGEA…DLLSSHWGHV (124 aa)).

This sequence belongs to the tRNA(Ile)-lysidine synthase family.

The protein localises to the cytoplasm. It carries out the reaction cytidine(34) in tRNA(Ile2) + L-lysine + ATP = lysidine(34) in tRNA(Ile2) + AMP + diphosphate + H(+). Ligates lysine onto the cytidine present at position 34 of the AUA codon-specific tRNA(Ile) that contains the anticodon CAU, in an ATP-dependent manner. Cytidine is converted to lysidine, thus changing the amino acid specificity of the tRNA from methionine to isoleucine. The protein is tRNA(Ile)-lysidine synthase of Deinococcus deserti (strain DSM 17065 / CIP 109153 / LMG 22923 / VCD115).